A 523-amino-acid chain; its full sequence is Synaptotagmin-10 (523 aa).

Residues 1 to 55 (MSFRKEDGVSSLCQKALHIITELCFAGQVEWDKCSGIFPADRSGQGGGGTDISVS) are Vesicular-facing. A cysteine motif region spans residues 13 to 35 (CQKALHIITELCFAGQVEWDKCS). Residues 56 to 76 (LLAVVVSFCGLALLVVSLFVF) traverse the membrane as a helical segment. Residues 77–523 (WKLCWPCWKS…CSSPRPPSTP (447 aa)) are Cytoplasmic-facing. Position 136 is a phosphothreonine (T136). C2 domains are found at residues 231–352 (TCGK…TVWK) and 363–496 (DLGE…THWH). 11 residues coordinate Ca(2+): D262, D268, D320, F321, D322, S325, D328, D394, D400, D454, and D456.

Belongs to the synaptotagmin family. As to quaternary structure, homodimer; disulfide-linked via the cysteine motif. Can also form heterodimers with SYT3, SYT6, SYT7 and SYT9. The cofactor is Ca(2+). Highly expressed in the olfactory bulb.

It localises to the cytoplasmic vesicle. The protein resides in the secretory vesicle membrane. Functionally, ca(2+) sensor specifically required for the Ca(2+)-dependent exocytosis of secretory vesicles containing IGF1 in neurons of the olfactory bulb. Exocytosis of IGF1 is required for sensory perception of smell. Not involved in Ca(2+)-dependent synaptic vesicle exocytosis. Acts through Ca(2+) and phospholipid binding to the C2 domain: Ca(2+) induces binding of the C2-domains to phospholipid membranes and to assembled SNARE-complexes; both actions contribute to triggering exocytosis. The chain is Synaptotagmin-10 from Mus musculus (Mouse).